A 160-amino-acid chain; its full sequence is Cytochrome c-type biogenesis protein CcmE (160 aa).

Over 1–7 (MTRKQRR) the chain is Cytoplasmic. Residues 8-28 (ATFIAVSLGILALAVGLVLYA) traverse the membrane as a helical; Signal-anchor for type II membrane protein segment. Residues 29–160 (MRDSIVYFYS…SETYGQGSYP (132 aa)) are Periplasmic-facing. Residues histidine 122 and tyrosine 126 each coordinate heme. A disordered region spans residues 141-160 (WQGEGAEAPHSETYGQGSYP).

Belongs to the CcmE/CycJ family.

The protein resides in the cell inner membrane. Its function is as follows. Heme chaperone required for the biogenesis of c-type cytochromes. Transiently binds heme delivered by CcmC and transfers the heme to apo-cytochromes in a process facilitated by CcmF and CcmH. The chain is Cytochrome c-type biogenesis protein CcmE from Parvibaculum lavamentivorans (strain DS-1 / DSM 13023 / NCIMB 13966).